Reading from the N-terminus, the 186-residue chain is Ribosome-recycling factor (186 aa).

This sequence belongs to the RRF family.

It is found in the cytoplasm. Functionally, responsible for the release of ribosomes from messenger RNA at the termination of protein biosynthesis. May increase the efficiency of translation by recycling ribosomes from one round of translation to another. The chain is Ribosome-recycling factor from Rickettsia canadensis (strain McKiel).